The following is a 293-amino-acid chain: MPELPEVETVRRGLQPVMEGAKIVTAEARRGDLRFPFQPDFVKRLQGQTVRGLGRRAKYLLADLGSGDVLLMHLGMSGSFRVIKPEHEETPGEFHYPRGKDSVHDHVVFHMSSGADIVFNDPRRFGFMKIIGRGEIETEPHLKDLGPEPLGNEFDAAMLARACAGKKTSLKAALLDQRVVAGLGNIYVCEALFRAHLSPRRLAATLATRKGEPTDHAKRLVEAIHTVLNEAIRAGGSSLRDHRQTTGELGYFQHSFQVYDREGEPCRTDGCEGVVKRFVQNGRSTFWCPKCQR.

Pro2 functions as the Schiff-base intermediate with DNA in the catalytic mechanism. Residue Glu3 is the Proton donor of the active site. Lys58 functions as the Proton donor; for beta-elimination activity in the catalytic mechanism. DNA-binding residues include His104, Arg123, and Lys166. The FPG-type zinc-finger motif lies at 257–293 (QVYDREGEPCRTDGCEGVVKRFVQNGRSTFWCPKCQR). Arg283 serves as the catalytic Proton donor; for delta-elimination activity.

Belongs to the FPG family. As to quaternary structure, monomer. Requires Zn(2+) as cofactor.

It carries out the reaction Hydrolysis of DNA containing ring-opened 7-methylguanine residues, releasing 2,6-diamino-4-hydroxy-5-(N-methyl)formamidopyrimidine.. It catalyses the reaction 2'-deoxyribonucleotide-(2'-deoxyribose 5'-phosphate)-2'-deoxyribonucleotide-DNA = a 3'-end 2'-deoxyribonucleotide-(2,3-dehydro-2,3-deoxyribose 5'-phosphate)-DNA + a 5'-end 5'-phospho-2'-deoxyribonucleoside-DNA + H(+). In terms of biological role, involved in base excision repair of DNA damaged by oxidation or by mutagenic agents. Acts as a DNA glycosylase that recognizes and removes damaged bases. Has a preference for oxidized purines, such as 7,8-dihydro-8-oxoguanine (8-oxoG). Has AP (apurinic/apyrimidinic) lyase activity and introduces nicks in the DNA strand. Cleaves the DNA backbone by beta-delta elimination to generate a single-strand break at the site of the removed base with both 3'- and 5'-phosphates. The polypeptide is Formamidopyrimidine-DNA glycosylase (Bradyrhizobium sp. (strain ORS 278)).